Reading from the N-terminus, the 583-residue chain is Steryl-sulfatase (583 aa).

Residues 1 to 21 form the signal peptide; it reads MPLRKMKIPFLLLFFLWEAES. The Lumenal portion of the chain corresponds to 22-184; sequence HAASRPNIIL…GSVFTTGFKR (163 aa). Asp35 and Asp36 together coordinate Ca(2+). The N-linked (GlcNAc...) asparagine glycan is linked to Asn47. Residue Cys75 coordinates Ca(2+). Cys75 functions as the Nucleophile in the catalytic mechanism. At Cys75 the chain carries 3-oxoalanine (Cys). Residue His136 is part of the active site. 2 cysteine pairs are disulfide-bonded: Cys141/Cys148 and Cys170/Cys242. Residues 185-208 form a helical membrane-spanning segment; that stretch reads LVFLPLQIVGVTLLTLAALNCLGL. Topologically, residues 209–212 are cytoplasmic; that stretch reads LHVP. The chain crosses the membrane as a helical span at residues 213-234; sequence LGVFFSLLFLAALILTLFLGFL. Over 235–583 the chain is Lumenal; it reads HYFRPLNCFM…REKQDKRLSR (349 aa). Residue Asn259 is glycosylated (N-linked (GlcNAc...) asparagine). Ca(2+) contacts are provided by Asp342 and Gln343. Disulfide bonds link Cys446-Cys489, Cys481-Cys487, Cys562-Cys570, and Cys563-Cys572.

Belongs to the sulfatase family. In terms of assembly, homodimer. Requires Ca(2+) as cofactor. The conversion to 3-oxoalanine (also known as C-formylglycine, FGly), of a serine or cysteine residue in prokaryotes and of a cysteine residue in eukaryotes, is critical for catalytic activity.

The protein localises to the cytoplasmic vesicle. It is found in the secretory vesicle. It localises to the microneme membrane. Its subcellular location is the endoplasmic reticulum membrane. The catalysed reaction is dehydroepiandrosterone 3-sulfate + H2O = 3beta-hydroxyandrost-5-en-17-one + sulfate + H(+). It catalyses the reaction estrone 3-sulfate + H2O = estrone + sulfate + H(+). Its function is as follows. Catalyzes the conversion of sulfated steroid precursors, such as dehydroepiandrosterone sulfate (DHEA-S) and estrone sulfate to the free steroid. The polypeptide is Steryl-sulfatase (STS) (Homo sapiens (Human)).